The following is a 161-amino-acid chain: EP300-interacting inhibitor of differentiation 2B (161 aa).

2 disordered regions span residues 1 to 26 (MAEP…GTAS) and 54 to 77 (ARSM…GLAS).

In terms of assembly, homodimer and heterodimer with EID2. Interacts with HDAC1 and HDAC2.

It localises to the nucleus. Acts as a repressor of MYOD-dependent transcription, glucocorticoid receptor-dependent transcription, and muscle differentiation. The protein is EP300-interacting inhibitor of differentiation 2B of Homo sapiens (Human).